A 112-amino-acid chain; its full sequence is uncharacterized protein (112 aa).

N-linked (GlcNAc...) asparagine; by host glycosylation is found at Asn29 and Asn60. Residues 66–86 (IFNGLGFILIVIFIYLLLITL) traverse the membrane as a helical segment.

It belongs to the asfivirus B117L family.

The protein resides in the host membrane. It localises to the virion. This is an uncharacterized protein from African swine fever virus (isolate Tick/South Africa/Pretoriuskop Pr4/1996) (ASFV).